The chain runs to 424 residues: Acetyl-CoA acetyltransferase, mitochondrial (424 aa).

Residues 1 to 30 constitute a mitochondrion transit peptide; that stretch reads MAALAVLHGVVRRPLLRGLLQEVRCLGRSY. The residue at position 63 (Lys-63) is an N6-acetyllysine; alternate. Residue Lys-63 is modified to N6-succinyllysine; alternate. At Lys-75 the chain carries N6-succinyllysine. Cys-123 serves as the catalytic Acyl-thioester intermediate. An N6-acetyllysine; alternate mark is found at Lys-171, Lys-178, Lys-187, and Lys-199. 4 positions are modified to N6-succinyllysine; alternate: Lys-171, Lys-178, Lys-187, and Lys-199. Position 204 is a phosphoserine (Ser-204). Tyr-216 is a binding site for CoA. Residue Tyr-216 participates in K(+) binding. N6-acetyllysine; alternate occurs at positions 220 and 227. Lys-220 and Lys-227 each carry N6-succinyllysine; alternate. At Lys-240 the chain carries N6-succinyllysine. Lys-242 is modified (N6-acetyllysine; alternate). Lys-242 carries the N6-succinyllysine; alternate modification. 2 positions are modified to N6-acetyllysine: Lys-248 and Lys-254. Residues 255-257 and Lys-260 each bind CoA; that span reads RVD. Position 260 is an N6-acetyllysine; alternate (Lys-260). Lys-260 bears the N6-succinyllysine; alternate mark. Residues Lys-263 and Lys-265 each carry the N6-succinyllysine modification. Position 270 is an N6-acetyllysine (Lys-270). 3 residues coordinate K(+): Ala-277, Ala-278, and Ala-280. Ser-281 is a CoA binding site. Lys-335 carries the N6-acetyllysine modification. Val-378 contributes to the K(+) binding site. The active-site Proton donor/acceptor is Cys-410.

The protein belongs to the thiolase-like superfamily. Thiolase family. Homotetramer. In terms of processing, succinylation at Lys-265, adjacent to a coenzyme A binding site. Desuccinylated by SIRT5.

The protein localises to the mitochondrion. The enzyme catalyses 2 acetyl-CoA = acetoacetyl-CoA + CoA. The catalysed reaction is propanoyl-CoA + acetyl-CoA = 2-methyl-3-oxobutanoyl-CoA + CoA. The protein operates within lipid metabolism; fatty acid beta-oxidation. Its activity is regulated as follows. Activated by potassium ions, but not sodium ions. Functionally, this is one of the enzymes that catalyzes the last step of the mitochondrial beta-oxidation pathway, an aerobic process breaking down fatty acids into acetyl-CoA. Using free coenzyme A/CoA, catalyzes the thiolytic cleavage of medium- to long-chain 3-oxoacyl-CoAs into acetyl-CoA and a fatty acyl-CoA shortened by two carbon atoms. The activity of the enzyme is reversible and it can also catalyze the condensation of two acetyl-CoA molecules into acetoacetyl-CoA. Thereby, it plays a major role in ketone body metabolism. This chain is Acetyl-CoA acetyltransferase, mitochondrial (Acat1), found in Rattus norvegicus (Rat).